A 193-amino-acid chain; its full sequence is Peptidyl-tRNA hydrolase (193 aa).

Tyrosine 21 contacts tRNA. Residue histidine 26 is the Proton acceptor of the active site. Positions 72, 74, and 120 each coordinate tRNA.

Belongs to the PTH family. As to quaternary structure, monomer.

The protein resides in the cytoplasm. It carries out the reaction an N-acyl-L-alpha-aminoacyl-tRNA + H2O = an N-acyl-L-amino acid + a tRNA + H(+). Functionally, hydrolyzes ribosome-free peptidyl-tRNAs (with 1 or more amino acids incorporated), which drop off the ribosome during protein synthesis, or as a result of ribosome stalling. Its function is as follows. Catalyzes the release of premature peptidyl moieties from peptidyl-tRNA molecules trapped in stalled 50S ribosomal subunits, and thus maintains levels of free tRNAs and 50S ribosomes. The protein is Peptidyl-tRNA hydrolase of Nocardia farcinica (strain IFM 10152).